The sequence spans 265 residues: MARGLKKHLKRLNAPKHWMLDKLGGAFAPKPSSGPHKSRECLPLILIIRNRLKYALTYREVISILMQRHVLVDGKVRTDKTYPAGFMDVISIPKTNENYRLLYDTKGRFRLHPIRDEDAKFKLCKVRSVQFGQKGIPYLNTYDGRTIRYPDPLIKANDTIKIDLETNKIVDFIKFDVGNVVMVTGGRNTGRVGVIKNREKHKGSFETIHVEDSLGHQFATRMGNVFTIGKGNKPWVSLPKGKGIKLSIIEEQRKRDAAAQAAANA.

Residues 42 to 104 (LPLILIIRNR…TNENYRLLYD (63 aa)) form the S4 RNA-binding domain.

Belongs to the eukaryotic ribosomal protein eS4 family.

The protein localises to the cytoplasm. This Zea mays (Maize) protein is Small ribosomal subunit protein eS4 (RPS4).